We begin with the raw amino-acid sequence, 314 residues long: Aspartate carbamoyltransferase catalytic subunit (314 aa).

Carbamoyl phosphate-binding residues include arginine 55 and threonine 56. Lysine 83 contacts L-aspartate. Carbamoyl phosphate contacts are provided by arginine 105, histidine 139, and glutamine 142. Residues arginine 172 and arginine 226 each contribute to the L-aspartate site. Carbamoyl phosphate is bound by residues glycine 267 and proline 268.

This sequence belongs to the aspartate/ornithine carbamoyltransferase superfamily. ATCase family. In terms of assembly, heterododecamer (2C3:3R2) of six catalytic PyrB chains organized as two trimers (C3), and six regulatory PyrI chains organized as three dimers (R2).

It carries out the reaction carbamoyl phosphate + L-aspartate = N-carbamoyl-L-aspartate + phosphate + H(+). It participates in pyrimidine metabolism; UMP biosynthesis via de novo pathway; (S)-dihydroorotate from bicarbonate: step 2/3. Its function is as follows. Catalyzes the condensation of carbamoyl phosphate and aspartate to form carbamoyl aspartate and inorganic phosphate, the committed step in the de novo pyrimidine nucleotide biosynthesis pathway. The protein is Aspartate carbamoyltransferase catalytic subunit of Rhodococcus jostii (strain RHA1).